A 370-amino-acid chain; its full sequence is tRNA N6-adenosine threonylcarbamoyltransferase (370 aa).

Fe cation contacts are provided by histidine 122 and histidine 126. Residues 153–157 (LLSGG), aspartate 186, glycine 199, and asparagine 298 each bind substrate. Aspartate 326 is a Fe cation binding site.

This sequence belongs to the KAE1 / TsaD family. Requires Fe(2+) as cofactor.

It localises to the cytoplasm. It carries out the reaction L-threonylcarbamoyladenylate + adenosine(37) in tRNA = N(6)-L-threonylcarbamoyladenosine(37) in tRNA + AMP + H(+). Required for the formation of a threonylcarbamoyl group on adenosine at position 37 (t(6)A37) in tRNAs that read codons beginning with adenine. Is involved in the transfer of the threonylcarbamoyl moiety of threonylcarbamoyl-AMP (TC-AMP) to the N6 group of A37, together with TsaE and TsaB. TsaD likely plays a direct catalytic role in this reaction. This is tRNA N6-adenosine threonylcarbamoyltransferase from Granulibacter bethesdensis (strain ATCC BAA-1260 / CGDNIH1).